A 380-amino-acid polypeptide reads, in one-letter code: Cytochrome b (380 aa).

A run of 4 helical transmembrane segments spans residues 34-54, 78-99, 114-134, and 179-199; these read FGSL…LLAA, WLIR…YLHI, WNTG…GYVL, and FFTL…IHLT. Positions 84 and 98 each coordinate heme b. Heme b-binding residues include H183 and H197. H202 contributes to the a ubiquinone binding site. 4 helical membrane passes run 227–247, 289–309, 321–341, and 348–368; these read LKDI…ALFS, LGGV…PLLH, FSQL…WVGS, and FIII…ILFP.

It belongs to the cytochrome b family. As to quaternary structure, the cytochrome bc1 complex contains 11 subunits: 3 respiratory subunits (MT-CYB, CYC1 and UQCRFS1), 2 core proteins (UQCRC1 and UQCRC2) and 6 low-molecular weight proteins (UQCRH/QCR6, UQCRB/QCR7, UQCRQ/QCR8, UQCR10/QCR9, UQCR11/QCR10 and a cleavage product of UQCRFS1). This cytochrome bc1 complex then forms a dimer. The cofactor is heme b.

It is found in the mitochondrion inner membrane. In terms of biological role, component of the ubiquinol-cytochrome c reductase complex (complex III or cytochrome b-c1 complex) that is part of the mitochondrial respiratory chain. The b-c1 complex mediates electron transfer from ubiquinol to cytochrome c. Contributes to the generation of a proton gradient across the mitochondrial membrane that is then used for ATP synthesis. This chain is Cytochrome b (MT-CYB), found in Antigone vipio (White-naped crane).